A 179-amino-acid polypeptide reads, in one-letter code: uncharacterized protein (179 aa).

Residues 1–14 are compositionally biased toward basic and acidic residues; that stretch reads MTKKVKLDQDEINN. Disordered regions lie at residues 1–90 and 121–147; these read MTKK…NNFC and HKKS…DKKV. Composition is skewed to low complexity over residues 15-90 and 126-137; these read KNKN…NNFC and RSQSQSSLNSFD. Over residues 138 to 147 the composition is skewed to basic and acidic residues; sequence QDNKSKDKKV.

This is an uncharacterized protein from Dictyostelium discoideum (Social amoeba).